The following is a 382-amino-acid chain: tRNA (guanine(26)-N(2))-dimethyltransferase (382 aa).

One can recognise a Trm1 methyltransferase domain in the interval 4–370; sequence TEVIEGKARL…REFSEILECV (367 aa). S-adenosyl-L-methionine-binding residues include R44, R69, D87, D113, and A114. Residues C244, C247, C261, and C264 each contribute to the Zn(2+) site.

Belongs to the class I-like SAM-binding methyltransferase superfamily. Trm1 family.

It catalyses the reaction guanosine(26) in tRNA + 2 S-adenosyl-L-methionine = N(2)-dimethylguanosine(26) in tRNA + 2 S-adenosyl-L-homocysteine + 2 H(+). In terms of biological role, dimethylates a single guanine residue at position 26 of a number of tRNAs using S-adenosyl-L-methionine as donor of the methyl groups. The chain is tRNA (guanine(26)-N(2))-dimethyltransferase from Metallosphaera sedula (strain ATCC 51363 / DSM 5348 / JCM 9185 / NBRC 15509 / TH2).